Reading from the N-terminus, the 401-residue chain is 8-amino-7-oxononanoate synthase (401 aa).

Residue Arg24 coordinates substrate. Position 111–112 (111–112 (GF)) interacts with pyridoxal 5'-phosphate. His137 serves as a coordination point for substrate. 3 residues coordinate pyridoxal 5'-phosphate: Ser183, His211, and Thr240. The residue at position 243 (Lys243) is an N6-(pyridoxal phosphate)lysine. Residue Thr357 coordinates substrate.

The protein belongs to the class-II pyridoxal-phosphate-dependent aminotransferase family. BioF subfamily. In terms of assembly, homodimer. Requires pyridoxal 5'-phosphate as cofactor.

The enzyme catalyses 6-carboxyhexanoyl-[ACP] + L-alanine + H(+) = (8S)-8-amino-7-oxononanoate + holo-[ACP] + CO2. The protein operates within cofactor biosynthesis; biotin biosynthesis. Its function is as follows. Catalyzes the decarboxylative condensation of pimeloyl-[acyl-carrier protein] and L-alanine to produce 8-amino-7-oxononanoate (AON), [acyl-carrier protein], and carbon dioxide. In Xanthomonas campestris pv. campestris (strain 8004), this protein is 8-amino-7-oxononanoate synthase.